The chain runs to 343 residues: Probable xyloglucan endotransglucosylase/hydrolase protein 30 (343 aa).

A signal peptide spans 1–23 (MSKSSYNHIFILILCLCLRSSSA). The GH16 domain occupies 24–224 (FTNLNTLSFE…YKFAPFVAEF (201 aa)). E109 serves as the catalytic Nucleophile. The active-site Proton donor is the E113. Residues E113 and 126 to 128 (QTN) each bind xyloglucan. N132 carries an N-linked (GlcNAc...) asparagine glycan. Xyloglucan contacts are provided by residues 136-140 (HRGRE), 203-204 (DW), G208, and R285. A disulfide bond links C280 and C293. The interval 306–343 (TGRLKFGGTEARERRRNRRQQRRPEIEIESDPDDRKLL) is disordered.

This sequence belongs to the glycosyl hydrolase 16 family. XTH group 3 subfamily. Contains at least one intrachain disulfide bond essential for its enzymatic activity. In terms of tissue distribution, predominantly expressed in green siliques.

It localises to the secreted. Its subcellular location is the cell wall. The protein resides in the extracellular space. It is found in the apoplast. It catalyses the reaction breaks a beta-(1-&gt;4) bond in the backbone of a xyloglucan and transfers the xyloglucanyl segment on to O-4 of the non-reducing terminal glucose residue of an acceptor, which can be a xyloglucan or an oligosaccharide of xyloglucan.. Catalyzes xyloglucan endohydrolysis (XEH) and/or endotransglycosylation (XET). Cleaves and religates xyloglucan polymers, an essential constituent of the primary cell wall, and thereby participates in cell wall construction of growing tissues. The chain is Probable xyloglucan endotransglucosylase/hydrolase protein 30 (XTH30) from Arabidopsis thaliana (Mouse-ear cress).